A 449-amino-acid chain; its full sequence is Probable D-serine dehydratase (449 aa).

Lysine 119 carries the N6-(pyridoxal phosphate)lysine modification.

This sequence belongs to the serine/threonine dehydratase family. DsdA subfamily. The cofactor is pyridoxal 5'-phosphate.

The catalysed reaction is D-serine = pyruvate + NH4(+). This is Probable D-serine dehydratase from Pseudomonas putida (strain ATCC 700007 / DSM 6899 / JCM 31910 / BCRC 17059 / LMG 24140 / F1).